A 311-amino-acid polypeptide reads, in one-letter code: Short chain dehydrogenase opdN (311 aa).

6 residues coordinate NADP(+): Leu-48, Lys-73, Glu-96, Asn-123, Tyr-217, and Lys-221. Residue Tyr-217 is the Proton donor of the active site. The Lowers pKa of active site Tyr role is filled by Lys-221.

This sequence belongs to the short-chain dehydrogenases/reductases (SDR) family.

It participates in secondary metabolite biosynthesis. Its function is as follows. Short chain dehydrogenase; part of the gene cluster that mediates the biosynthesis of oxopyrrolidines, polyketide-amino acid hybrid compounds with feature structures of tetramic acid. Does not seem to play a role in oxopyrrolidines A and B biosynthesis. May be involved in further modifications of these oxopyrrolidines. The sequence is that of Short chain dehydrogenase opdN from Penicillium oxalicum (strain 114-2 / CGMCC 5302) (Penicillium decumbens).